A 492-amino-acid chain; its full sequence is Alpha/beta hydrolase ucsC (492 aa).

Catalysis depends on Ser-258, which acts as the Nucleophile.

It belongs to the AB hydrolase superfamily. FUS2 hydrolase family. As to quaternary structure, homodimer.

It participates in mycotoxin biosynthesis. Its function is as follows. Alpha/beta hydrolase; part of the gene cluster that mediates the biosynthesis of UCS1025A, a member of the pyrrolizidinone family that acts as a strong telomerase inhibitor and displays potent antibacterial and antitumor properties. These compounds share a hemiaminal-containing pyrrolizidinone core fused with a gamma-lactone, giving a furopyrrolizidine that is connected to a decalin fragment. The polyketide synthase module (PKS) of the PKS-NRPS ucsA is responsible for the synthesis of the polyketide backbone via the condensation of an acetyl-CoA starter unit with 6 malonyl-CoA units. The downstream nonribosomal peptide synthetase (NRPS) module then amidates the carboxyl end of the polyketide with a 2S,3S-methylproline derived from L-isoleucine by the 2-oxoglutarate-dependent dioxygenase ucsF which converts L-isoleucine to (4S,5S)-4-methylpyrroline-5-carboxylate that is further converted to 2S,3S-methylproline by the pyrroline-5-carboxylate reductase ucsG. Reductive release of the completed aminoacyl polyketide from the assembly line can form the 3-pyrrolin-2-one structure via an intramolecular Knoevenagel reaction. Because ucsA lacks a designated enoylreductase (ER) domain, the required activity is provided the enoyl reductase ucsL. This keto acyclic precursor is the substrate of the Diels-Alderase ucsH, that catalyzes the Diels-Alder cycloaddition. Oxidation of the 3S-methyl group to a carboxylate by the cytochrome P450 monooxygenase ucsK allows an oxa-Michael cyclization that might involve the reductase/dehydrogenase ucsI and which furnishes the furopyrrolizidine. The oxidase ucsJ likely plays a critical role in stereoselective reduction of the C5-C6 double bond to afford the required R-configured carboxylate group. Further enolization and oxidation at C5 by an unidentified enzyme affords the last intermediate that can undergo oxa-Michael cyclization to yield UCS1025A. The protein is Alpha/beta hydrolase ucsC of Acremonium sp.